The chain runs to 130 residues: Fluoride-specific ion channel FluC (130 aa).

4 helical membrane-spanning segments follow: residues 1-21 (MGEILLLAAGGALGAVSRYGL), 36-56 (GTLIVNCLGCFVLGFLMQWGF), 65-85 (LKLMLTAGFLGAFTTFSTFSY), and 103-123 (ILANVLLGLLMVFIGAYLGSL). Residues glycine 75 and threonine 78 each coordinate Na(+).

Belongs to the fluoride channel Fluc/FEX (TC 1.A.43) family.

The protein localises to the cell membrane. The enzyme catalyses fluoride(in) = fluoride(out). Its activity is regulated as follows. Na(+) is not transported, but it plays an essential structural role and its presence is essential for fluoride channel function. In terms of biological role, fluoride-specific ion channel. Important for reducing fluoride concentration in the cell, thus reducing its toxicity. This Dehalococcoides mccartyi (strain ATCC BAA-2266 / KCTC 15142 / 195) (Dehalococcoides ethenogenes (strain 195)) protein is Fluoride-specific ion channel FluC.